Here is a 267-residue protein sequence, read N- to C-terminus: GTP cyclohydrolase MptA (267 aa).

This sequence belongs to the GTP cyclohydrolase IV family. Homodimer. The cofactor is Fe(2+).

It catalyses the reaction GTP + H2O = 7,8-dihydroneopterin 2',3'-cyclic phosphate + formate + diphosphate + H(+). It participates in cofactor biosynthesis; 5,6,7,8-tetrahydromethanopterin biosynthesis. Converts GTP to 7,8-dihydro-D-neopterin 2',3'-cyclic phosphate, the first intermediate in the biosynthesis of coenzyme methanopterin. The chain is GTP cyclohydrolase MptA from Pyrococcus furiosus (strain ATCC 43587 / DSM 3638 / JCM 8422 / Vc1).